We begin with the raw amino-acid sequence, 381 residues long: Creatine kinase B-type (381 aa).

The Phosphagen kinase N-terminal domain maps to 11–98 (KMKYSVDDEY…FDPVIEDRHG (88 aa)). Val-72 contacts creatine. The Phosphagen kinase C-terminal domain occupies 125–367 (YVLSSRVRTG…KLLIEMEKRL (243 aa)). ATP contacts are provided by residues 128–132 (SSRVR), Arg-130, Arg-132, and His-191. Glu-232 contacts creatine. Residue Arg-236 participates in ATP binding. Residue Thr-282 is modified to Phosphothreonine; by autocatalysis. Ser-285 contacts creatine. The residue at position 285 (Ser-285) is a Phosphoserine; by autocatalysis. Residue Thr-289 is modified to Phosphothreonine; by autocatalysis. ATP is bound by residues Arg-292, Arg-320, 320–325 (RGTGGV), and Asp-335.

Belongs to the ATP:guanido phosphotransferase family. As to quaternary structure, dimer of identical or non-identical chains, which can be either B (brain type) or M (muscle type). With MM being the major form in skeletal muscle and myocardium, MB existing in myocardium, and BB existing in many tissues, especially brain. Ba-CK and Bb-CK are phosphorylated. In terms of processing, the N-terminus of BA-CK is blocked. As to expression, expressed in almost all tissues and found enriched in various region of the brain, retina, heart, gizzard, gut and sperm.

The protein resides in the cytoplasm. Its subcellular location is the cytosol. The protein localises to the mitochondrion. It localises to the cell membrane. The enzyme catalyses creatine + ATP = N-phosphocreatine + ADP + H(+). Its function is as follows. Reversibly catalyzes the transfer of phosphate between ATP and various phosphogens (e.g. creatine phosphate). Creatine kinase isoenzymes play a central role in energy transduction in tissues with large, fluctuating energy demands, such as skeletal muscle, heart, brain and spermatozoa. The protein is Creatine kinase B-type of Gallus gallus (Chicken).